The chain runs to 472 residues: Deoxyribodipyrimidine photo-lyase (472 aa).

The Photolyase/cryptochrome alpha/beta domain occupies 2–134; that stretch reads TTHLVWFRQD…VCEGFDDSVI (133 aa). Residues N109 and E110 each coordinate (6R)-5,10-methylene-5,6,7,8-tetrahydrofolate. Position 223 (Y223) interacts with FAD. Residue R227 participates in DNA binding. Residues 235 to 239, W272, and 275 to 282 contribute to the FAD site; these read TSRLS and ELIWREFY. 2 interaction with DNA regions span residues 275–282 and 342–343; these read ELIWREFY and NR. 373–375 is a binding site for FAD; it reads DGD. Q405 contributes to the DNA binding site.

This sequence belongs to the DNA photolyase class-1 family. Monomer. The cofactor is FAD. Requires (6R)-5,10-methylene-5,6,7,8-tetrahydrofolate as cofactor.

It carries out the reaction cyclobutadipyrimidine (in DNA) = 2 pyrimidine residues (in DNA).. Functionally, involved in repair of UV radiation-induced DNA damage. Catalyzes the light-dependent monomerization (300-600 nm) of cyclobutyl pyrimidine dimers (in cis-syn configuration), which are formed between adjacent bases on the same DNA strand upon exposure to ultraviolet radiation. In Escherichia coli (strain K12), this protein is Deoxyribodipyrimidine photo-lyase (phrB).